Consider the following 241-residue polypeptide: Probable transcriptional regulatory protein RSc2190 (241 aa).

This sequence belongs to the TACO1 family.

It is found in the cytoplasm. This chain is Probable transcriptional regulatory protein RSc2190, found in Ralstonia nicotianae (strain ATCC BAA-1114 / GMI1000) (Ralstonia solanacearum).